Here is a 525-residue protein sequence, read N- to C-terminus: Sensory neuron membrane protein 1 (525 aa).

Topologically, residues 1-11 (MLLPKELKYAA) are cytoplasmic. A helical membrane pass occupies residues 12-32 (IAGGVAVFGLIFGWVLFPVIL). Residues 33 to 456 (KGQLKKEMAL…LKHQLFIPKR (424 aa)) are Extracellular-facing. N-linked (GlcNAc...) asparagine glycans are attached at residues N67, N229, and N324. Cystine bridges form between C268–C333, C297–C352, and C335–C341. N440 carries an N-linked (GlcNAc...) asparagine glycan. The helical transmembrane segment at 457–477 (VVGVLRWWMVSFGSLGADIGI) threads the bilayer. Topologically, residues 478–525 (VYHFRDHIMRLAVSGDTKVSKVTPEEDPEQKDISVIGPPAQEPAKINI) are cytoplasmic. The interval 497–525 (SKVTPEEDPEQKDISVIGPPAQEPAKINI) is disordered.

Belongs to the CD36 family.

The protein localises to the cell membrane. In terms of biological role, plays an olfactory role that is not restricted to pheromone sensitivity. This is Sensory neuron membrane protein 1 from Mamestra brassicae (Cabbage moth).